A 200-amino-acid chain; its full sequence is Formate dehydrogenase iron-sulfur subunit (200 aa).

3 4Fe-4S ferredoxin-type domains span residues 7 to 37, 50 to 81, and 82 to 111; these read VKFYCDEARCIDCHGCDVACKEAHHLPVGVN, GKEKSLSIACMHCSDAPCAQVCPVDCFYVRAD, and GIVLHDKEKCIGCGYCLYACPFGAPQFPKS. Residues C16, C19, C22, C26, C59, C62, C67, C71, C91, C94, C97, C101, C123, C126, C155, and C159 each contribute to the [4Fe-4S] cluster site.

As to quaternary structure, formate dehydrogenase is a membrane-bound complex, formed of at least three different subunits. [4Fe-4S] cluster is required as a cofactor.

In terms of biological role, this chain is an electron transfer unit containing 18 cysteine residues, 16 of which occur in four clusters. This is Formate dehydrogenase iron-sulfur subunit (fdhB1) from Wolinella succinogenes (strain ATCC 29543 / DSM 1740 / CCUG 13145 / JCM 31913 / LMG 7466 / NCTC 11488 / FDC 602W) (Vibrio succinogenes).